Consider the following 98-residue polypeptide: Small ribosomal subunit protein uS19 (98 aa).

The interval 77 to 98 is disordered; it reads TRTFRGHAGGKAEKGGSAPRKK.

Belongs to the universal ribosomal protein uS19 family.

Protein S19 forms a complex with S13 that binds strongly to the 16S ribosomal RNA. This chain is Small ribosomal subunit protein uS19, found in Chlorobium limicola (strain DSM 245 / NBRC 103803 / 6330).